A 415-amino-acid polypeptide reads, in one-letter code: 3-isopropylmalate dehydratase large subunit (415 aa).

[4Fe-4S] cluster contacts are provided by C297, C355, and C358.

Belongs to the aconitase/IPM isomerase family. LeuC type 2 subfamily. As to quaternary structure, heterodimer of LeuC and LeuD. [4Fe-4S] cluster is required as a cofactor.

It carries out the reaction (2R,3S)-3-isopropylmalate = (2S)-2-isopropylmalate. The protein operates within amino-acid biosynthesis; L-leucine biosynthesis; L-leucine from 3-methyl-2-oxobutanoate: step 2/4. Catalyzes the isomerization between 2-isopropylmalate and 3-isopropylmalate, via the formation of 2-isopropylmaleate. This chain is 3-isopropylmalate dehydratase large subunit, found in Metallosphaera sedula (strain ATCC 51363 / DSM 5348 / JCM 9185 / NBRC 15509 / TH2).